The primary structure comprises 131 residues: Protein Turandot M (131 aa).

The first 23 residues, methionine 1 to alanine 23, serve as a signal peptide directing secretion.

The protein belongs to the Turandot family.

The protein resides in the secreted. Its function is as follows. A humoral factor that may play a role in stress tolerance. Requires Mekk1 expression in the fat body to regulate response to septic injury and consequent immune response. In Drosophila erecta (Fruit fly), this protein is Protein Turandot M.